Here is a 340-residue protein sequence, read N- to C-terminus: Thermopsin (340 aa).

Positions 1 to 28 (MNFKSICLIILLSALIIPYIPQNIYFFP) are cleaved as a signal peptide. The propeptide occupies 29–41 (HRNTTGATISSGL). Residues Asn31, Asn65, Asn85, Asn117, Asn148, Asn197, Asn277, Asn287, Asn327, and Asn334 are each glycosylated (N-linked (GlcNAc...) asparagine).

This sequence belongs to the peptidase A5 family.

It localises to the secreted. It carries out the reaction Specificity similar to pepsin A, prefers bulky hydrophobic side-chains on either side of the scissible bond.. May represent a new class of acid proteases. It digests proteins and peptides in acidic solution. The sequence is that of Thermopsin (thpS) from Sulfolobus acidocaldarius (strain ATCC 33909 / DSM 639 / JCM 8929 / NBRC 15157 / NCIMB 11770).